Consider the following 100-residue polypeptide: UPF0045 protein MJ1052 (100 aa).

Belongs to the UPF0045 family.

This is UPF0045 protein MJ1052 from Methanocaldococcus jannaschii (strain ATCC 43067 / DSM 2661 / JAL-1 / JCM 10045 / NBRC 100440) (Methanococcus jannaschii).